Reading from the N-terminus, the 620-residue chain is Sodium-dependent dopamine transporter (620 aa).

At 1 to 56 (MSKSKCSVGLMSSVVAPAKEPNAVGPKEVELILVKEQNGVQLTSSTLTNPRQSPVE) the chain is on the cytoplasmic side. Residues 57 to 95 (AQDRETWGKKIDFLLSVIGFAVDLANVWRFPYLCYKNGG) traverse the membrane as a discontinuously helical segment. 5 residues coordinate Na(+): glycine 75, alanine 77, valine 78, aspartate 79, and asparagine 82. Aspartate 79 serves as a coordination point for dopamine. Transmembrane regions (helical) follow at residues 96-127 (GAFLVPYLLFMVIAGMPLFYMELALGQFNREG) and 128-171 (AAGV…FSSF). Dopamine is bound by residues serine 149 and glycine 153. Residues 172–236 (TTELPWIHCN…SHGIDDLGPP (65 aa)) are Extracellular-facing. A disulfide bond links cysteine 180 and cysteine 189. N-linked (GlcNAc...) asparagine glycans are attached at residues asparagine 181, asparagine 188, and asparagine 205. A run of 2 helical transmembrane segments spans residues 237–256 (RWQLTACLVLVIVLLYFSLW) and 257–287 (KGVKTSGKVVWITATMPYVVLTALLLRGVTL). Residues 288-306 (PGAIDGIRAYLSVDFYRLC) lie on the Extracellular side of the membrane. The discontinuously helical transmembrane segment at 307 to 335 (EASVWIDAATQVCFSLGVGFGVLIAFSSY) threads the bilayer. Position 317 (glutamine 317) interacts with chloride. Phenylalanine 320 serves as a coordination point for dopamine. Residues serine 321 and asparagine 353 each coordinate Na(+). Serine 321 provides a ligand contact to chloride. The chain crosses the membrane as a helical span at residues 336-376 (NKFTNNCYRDAIVTTSINSLTSFSSGFVVFSFLGYMAQKHS). Serine 357 provides a ligand contact to chloride. At 377–400 (VPIGDVAKDGPGLIFIIYPEAIAT) the chain is on the extracellular side. The next 3 membrane-spanning stretches (helical) occupy residues 401–442 (LPLS…QLLH), 443–466 (RHRELFTLFIVLATFLLSLFCVTN), and 467–499 (GGIYVFTLLDHFAAGTSILFGVLIEAIGVAWFY). Leucine 418, aspartate 421, and serine 422 together coordinate Na(+). Dopamine is bound by residues serine 422 and alanine 423. The Cytoplasmic segment spans residues 500–516 (GVGQFSDDIQQMTGQRP). A helical membrane pass occupies residues 517-542 (SLYWRLCWKLVSPCFLLFVVVVSIVT). Over 543–553 (FRPPHYGAYIF) the chain is Extracellular. The chain crosses the membrane as a helical span at residues 554–583 (PDWANALGWVIATSSMAMVPIYAAYKFCSL). Positions 561-590 (GWVIATSSMAMVPIYAAYKFCSLPGSFREK) are interaction with TGFB1I1. Over 584-620 (PGSFREKLAYAIAPEKDRELVDRGEVRQFTLRHWLKV) the chain is Cytoplasmic.

Belongs to the sodium:neurotransmitter symporter (SNF) (TC 2.A.22) family. SLC6A3 subfamily. Monomer. Homooligomer; disulfide-linked. Interacts with PRKCABP and TGFB1I1. Interacts (via N-terminus) with SYNGR3 (via N-terminus). Interacts with SLC18A2. Interacts with TOR1A (ATP-bound); TOR1A regulates SLC6A3 subcellular location. Interacts with alpha-synuclein/SNCA. Interacts with SEPTIN4. As to expression, highly expressed in substantia nigra. Expressed in axonal varicosities in dopaminergic nerve terminals (at protein level). Expressed in the striatum (at protein level).

It is found in the cell membrane. Its subcellular location is the cell projection. The protein resides in the neuron projection. The protein localises to the axon. The catalysed reaction is dopamine(out) + chloride(out) + Na(+)(out) = dopamine(in) + chloride(in) + Na(+)(in). It carries out the reaction dopamine(out) + chloride(out) + 2 Na(+)(out) = dopamine(in) + chloride(in) + 2 Na(+)(in). The enzyme catalyses (R)-noradrenaline(out) + chloride(out) + Na(+)(out) = (R)-noradrenaline(in) + chloride(in) + Na(+)(in). Inhibited by cocaine, which occupies the same binding site as dopamine. Inhibited by zinc ions. Enhanced by the antibiotic valinomycin. Inhibited by benztropine. Inhibited by GBR 12909 dihydrochloride and amphetamine. Inhibited by mazindol, GBR 12783 dihydrochloride, nomifensine, diclofensine, amfonelic acid, Lu 19005, Win-35428, bupropion and ritalin. Its function is as follows. Mediates sodium- and chloride-dependent transport of dopamine. Also mediates sodium- and chloride-dependent transport of norepinephrine (also known as noradrenaline). Regulator of light-dependent retinal hyaloid vessel regression, downstream of OPN5 signaling. The protein is Sodium-dependent dopamine transporter (SLC6A3) of Homo sapiens (Human).